A 259-amino-acid polypeptide reads, in one-letter code: GTP cyclohydrolase FolE2 (259 aa).

The protein belongs to the GTP cyclohydrolase IV family.

It catalyses the reaction GTP + H2O = 7,8-dihydroneopterin 3'-triphosphate + formate + H(+). It functions in the pathway cofactor biosynthesis; 7,8-dihydroneopterin triphosphate biosynthesis; 7,8-dihydroneopterin triphosphate from GTP: step 1/1. Its function is as follows. Converts GTP to 7,8-dihydroneopterin triphosphate. The sequence is that of GTP cyclohydrolase FolE2 from Halorhodospira halophila (strain DSM 244 / SL1) (Ectothiorhodospira halophila (strain DSM 244 / SL1)).